The primary structure comprises 207 residues: MDADLPYLTGLDAKVAAIVAPVLADMGFELVRVAILGRESPTVQIMADRADGTLIAIEDCEQISHAVGAVLDVEDPLPGAWTLEVSSAGIDRPLTRAKDWTRFAGHLAKAEVNIPIDGRKRFSGILLGAEDGFGRLRLEDGTEVALPLSDMRRARLVLTDELIAASAHMMRAPGGAPEEGEEDTTEAAPEGAGKSPKPGRRPARKTH.

A disordered region spans residues 171-207 (RAPGGAPEEGEEDTTEAAPEGAGKSPKPGRRPARKTH). A compositionally biased stretch (basic residues) spans 197–207 (KPGRRPARKTH).

Belongs to the RimP family.

It localises to the cytoplasm. Functionally, required for maturation of 30S ribosomal subunits. The polypeptide is Ribosome maturation factor RimP (Gluconacetobacter diazotrophicus (strain ATCC 49037 / DSM 5601 / CCUG 37298 / CIP 103539 / LMG 7603 / PAl5)).